The primary structure comprises 440 residues: DNA dC-&gt;dU-editing enzyme APOBEC-3 (440 aa).

CMP/dCMP-type deaminase domains lie at 49 to 165 and 249 to 368; these read GRKD…AQVA and EEEF…LCSL. Histidine 82 serves as a coordination point for Zn(2+). Glutamate 84 functions as the Proton donor in the catalytic mechanism. Zn(2+)-binding residues include cysteine 116, cysteine 119, histidine 299, cysteine 327, and cysteine 330.

The protein belongs to the cytidine and deoxycytidylate deaminase family. In terms of assembly, homodimer. Interacts with mouse mammary tumor virus (MMTV) nucleocapsid protein p14. The cofactor is Zn(2+). In terms of tissue distribution, expressed in spleen, node and lung.

Its subcellular location is the cytoplasm. It catalyses the reaction a 2'-deoxycytidine in single-stranded DNA + H2O + H(+) = a 2'-deoxyuridine in single-stranded DNA + NH4(+). DNA deaminase (cytidine deaminase) which acts as an inhibitor of retrovirus replication and retrotransposon mobility via deaminase-dependent and -independent mechanisms. Selectively targets single-stranded DNA and does not deaminate double-stranded DNA or single- or double-stranded RNA. Exhibits antiviral activity against HIV-1, simian immunodeficiency viruses (SIVs), mouse mammary tumor virus (MMTV) and friend murine leukemia virus (FrMLV) and may inhibit the mobility of LTR retrotransposons. This chain is DNA dC-&gt;dU-editing enzyme APOBEC-3 (Apobec3), found in Mus musculus (Mouse).